A 792-amino-acid polypeptide reads, in one-letter code: Cullin-4 (792 aa).

Polar residues predominate over residues 1–10 (MSLPTKRSTF). A disordered region spans residues 1–43 (MSLPTKRSTFSAASASDDSSYSSPPMKKAKNDLHHSPQHPNTA). Low complexity predominate over residues 11–23 (SAASASDDSSYSS). In terms of domain architecture, Cullin neddylation spans 724-784 (DRQYQIDAAI…REYLEREKSN (61 aa)). K738 participates in a covalent cross-link: Glycyl lysine isopeptide (Lys-Gly) (interchain with G-Cter in NEDD8).

Belongs to the cullin family. In terms of assembly, interacts with COP10, CSN3, CSN4, CSN5, CSN8, DDB1A, DDB1B, DDB2, DET1 and RBX1. Neddylated (rubylated). Deneddylated via its interaction with the COP9 signalosome (CSN) complex. In terms of tissue distribution, ubiquitous.

Its subcellular location is the nucleus. The protein operates within protein modification; protein ubiquitination. Component of the CUL4-RBX1-CDD (COP10-DDB1a-DET1) E3 ubiquitin-protein ligase complex which mediates the ubiquitination and subsequent proteasomal degradation of target proteins. Participates in the CDD complex to light-mediated control of development. May repress photomorphogenesis through enhancing COP1 E3 ubiquitin-protein ligase activity. Acts together with the CUL4-DDB1-COP1-SPA E3 ubiquitin-protein ligase complexes in the repression of photomorphogenesis and flowering time. Component ot the CUL4-RBX1-DDB1-PRL1 E3 ubiquitin-protein ligase complex which mediates ubiquitination and subsequent degradation of AKIN10. Component of the CUL4-RBX1-DDB1-DWA1/DWA2 E3 ubiquitin-protein ligase complex that acts as a negative regulator in abscisic acid (ABA) signaling and may target ABI5 for degradation. The polypeptide is Cullin-4 (CUL4) (Arabidopsis thaliana (Mouse-ear cress)).